The chain runs to 351 residues: MGSLSDISFFDHLQELARRDCCVNALLWCAFTVGAVKLTTFMLSLISIALETTVLPSASYKKYGARKGAYALVTGASDGIGKEFALQLASKGFNVLLVSRTEAKLLELKQEIMAKYKVDARVLSVDFGVDNRLTYTAISELCGELPVTVLVNNVGVSHSIPVSFLETTEEELRGIITVNNTATLMVTQTVAPLVIANARRLQCRGLVLTMGSFGGLLPTPLLATYSGSKAFLQAWSAALAGELAPHNVDVQIVLSYLVTSAMSKVRRASALIPTPRAFVRSTLASLGRRVGAQERYATCTPYWSHALYHFLIENTVGVHSRLANAINYRFHADIRKRALRKAARKAAEKQE.

The chain crosses the membrane as a helical span at residues Leu26–Ile46. The NADP(+) site is built by Leu72, Asp126, Asn153, Tyr225, Lys229, Val258, and Ser260. The active-site Proton donor is Tyr225. Lys229 acts as the Lowers pKa of active site Tyr in catalysis.

The protein belongs to the short-chain dehydrogenases/reductases (SDR) family.

It localises to the endoplasmic reticulum membrane. It catalyses the reaction a very-long-chain (3R)-3-hydroxyacyl-CoA + NADP(+) = a very-long-chain 3-oxoacyl-CoA + NADPH + H(+). Its pathway is lipid metabolism; fatty acid biosynthesis. Functionally, component of the microsomal membrane bound fatty acid elongation system, which produces the 26-carbon very long-chain fatty acids (VLCFA) from palmitate. Catalyzes the reduction of the 3-ketoacyl-CoA intermediate that is formed in each cycle of fatty acid elongation. VLCFAs serve as precursors for ceramide and sphingolipids. The polypeptide is Very-long-chain 3-oxoacyl-CoA reductase (Eremothecium gossypii (strain ATCC 10895 / CBS 109.51 / FGSC 9923 / NRRL Y-1056) (Yeast)).